We begin with the raw amino-acid sequence, 668 residues long: Macrolide export ATP-binding/permease protein MacB 1/2 (668 aa).

The ABC transporter domain occupies 9-247 (IRLRGVGREY…PGPGPAQAPQ (239 aa)). ATP is bound at residue 45–52 (GASGSGKS). A disordered region spans residues 230-257 (RTGAPAADPGPGPAQAPQPAPQPAPVQA). Pro residues predominate over residues 237-255 (DPGPGPAQAPQPAPQPAPV). A run of 4 helical transmembrane segments spans residues 294–314 (FLTM…VALG), 541–561 (LALL…IGVM), 598–618 (LVCV…GLAF), and 634–654 (MLAA…LPAV).

Belongs to the ABC transporter superfamily. Macrolide exporter (TC 3.A.1.122) family. In terms of assembly, homodimer.

Its subcellular location is the cell inner membrane. Its function is as follows. Non-canonical ABC transporter that contains transmembrane domains (TMD), which form a pore in the inner membrane, and an ATP-binding domain (NBD), which is responsible for energy generation. Confers resistance against macrolides. The sequence is that of Macrolide export ATP-binding/permease protein MacB 1/2 from Paracoccus denitrificans (strain Pd 1222).